The chain runs to 125 residues: Fluoride-specific ion channel FluC (125 aa).

Helical transmembrane passes span 2 to 22, 35 to 55, 68 to 88, and 98 to 118; these read WLSILAIFCGAGLGALLRTGF, LGTLISNMVGGYLIGIALAFF, LIITGFLGGLTTFSSFSAEVV, and WALGTALLHLVGSLVLTLLGI. Na(+)-binding residues include glycine 75 and threonine 78.

It belongs to the fluoride channel Fluc/FEX (TC 1.A.43) family.

The protein localises to the cell inner membrane. The enzyme catalyses fluoride(in) = fluoride(out). Its activity is regulated as follows. Na(+) is not transported, but it plays an essential structural role and its presence is essential for fluoride channel function. Functionally, fluoride-specific ion channel. Important for reducing fluoride concentration in the cell, thus reducing its toxicity. This is Fluoride-specific ion channel FluC from Polynucleobacter asymbioticus (strain DSM 18221 / CIP 109841 / QLW-P1DMWA-1) (Polynucleobacter necessarius subsp. asymbioticus).